The following is a 238-amino-acid chain: Small ribosomal subunit protein uS2 (238 aa).

The protein belongs to the universal ribosomal protein uS2 family.

The protein is Small ribosomal subunit protein uS2 of Actinobacillus pleuropneumoniae serotype 7 (strain AP76).